The following is a 147-amino-acid chain: D-aminoacyl-tRNA deacylase (147 aa).

Residues 137–138 (GP) carry the Gly-cisPro motif, important for rejection of L-amino acids motif.

The protein belongs to the DTD family. In terms of assembly, homodimer.

Its subcellular location is the cytoplasm. The enzyme catalyses glycyl-tRNA(Ala) + H2O = tRNA(Ala) + glycine + H(+). The catalysed reaction is a D-aminoacyl-tRNA + H2O = a tRNA + a D-alpha-amino acid + H(+). Functionally, an aminoacyl-tRNA editing enzyme that deacylates mischarged D-aminoacyl-tRNAs. Also deacylates mischarged glycyl-tRNA(Ala), protecting cells against glycine mischarging by AlaRS. Acts via tRNA-based rather than protein-based catalysis; rejects L-amino acids rather than detecting D-amino acids in the active site. By recycling D-aminoacyl-tRNA to D-amino acids and free tRNA molecules, this enzyme counteracts the toxicity associated with the formation of D-aminoacyl-tRNA entities in vivo and helps enforce protein L-homochirality. The protein is D-aminoacyl-tRNA deacylase of Acinetobacter baumannii (strain ACICU).